Here is a 287-residue protein sequence, read N- to C-terminus: ATP synthase gamma chain (287 aa).

It belongs to the ATPase gamma chain family. F-type ATPases have 2 components, CF(1) - the catalytic core - and CF(0) - the membrane proton channel. CF(1) has five subunits: alpha(3), beta(3), gamma(1), delta(1), epsilon(1). CF(0) has three main subunits: a, b and c.

It is found in the cell inner membrane. Produces ATP from ADP in the presence of a proton gradient across the membrane. The gamma chain is believed to be important in regulating ATPase activity and the flow of protons through the CF(0) complex. The sequence is that of ATP synthase gamma chain from Ruthia magnifica subsp. Calyptogena magnifica.